Consider the following 432-residue polypeptide: N-acylneuraminate cytidylyltransferase (432 aa).

Residue Met-1 is modified to N-acetylmethionine. The segment at 1-38 is disordered; that stretch reads MDALEKGAVTSGPAPRGRPSRGRPPKLQRSRGAGRGLE. The BC1 motif motif lies at 15-31; sequence PRGRPSRGRPPKLQRSR. The segment covering 18–29 has biased composition (basic residues); sequence RPSRGRPPKLQR. Omega-N-methylarginine occurs at positions 35 and 50. Substrate-binding residues include Arg-50, Asn-60, Arg-109, Ser-118, Ser-120, and Gln-141. The BC2 motif signature appears at 198–204; it reads KRPRRQD. Arg-199 is a catalytic residue. Residues 267 to 274 carry the BC3 motif motif; that stretch reads KEKLKEIK.

Belongs to the CMP-NeuNAc synthase family. As to quaternary structure, homotetramer; the active enzyme is formed by a dimer of dimers. As to expression, highly expressed in brain and heart, and at intermediate level muscle and liver.

It localises to the nucleus. It carries out the reaction an N-acylneuraminate + CTP = a CMP-N-acyl-beta-neuraminate + diphosphate. The protein operates within amino-sugar metabolism; N-acetylneuraminate metabolism. In terms of biological role, catalyzes the activation of N-acetylneuraminic acid (NeuNAc) to cytidine 5'-monophosphate N-acetylneuraminic acid (CMP-NeuNAc), a substrate required for the addition of sialic acid. Has some activity toward NeuNAc, N-glycolylneuraminic acid (Neu5Gc) or 2-keto-3-deoxy-D-glycero-D-galacto-nononic acid (KDN). This chain is N-acylneuraminate cytidylyltransferase (Cmas), found in Mus musculus (Mouse).